The following is a 128-amino-acid chain: Sulfurtransferase TusD (128 aa).

Residue Cys78 is the Cysteine persulfide intermediate of the active site.

This sequence belongs to the DsrE/TusD family. As to quaternary structure, heterohexamer, formed by a dimer of trimers. The hexameric TusBCD complex contains 2 copies each of TusB, TusC and TusD. The TusBCD complex interacts with TusE.

The protein localises to the cytoplasm. Functionally, part of a sulfur-relay system required for 2-thiolation of 5-methylaminomethyl-2-thiouridine (mnm(5)s(2)U) at tRNA wobble positions. Accepts sulfur from TusA and transfers it in turn to TusE. The chain is Sulfurtransferase TusD from Escherichia coli O127:H6 (strain E2348/69 / EPEC).